We begin with the raw amino-acid sequence, 858 residues long: G2-specific protein kinase nim-1 (858 aa).

The Protein kinase domain occupies 7-290; it reads YELLEKIGHG…TATLLNLPIV (284 aa). ATP is bound by residues 13–21 and K36; that span reads IGHGSFGII. D161 serves as the catalytic Proton acceptor. Residue T194 is modified to Phosphothreonine; by autocatalysis. Residues 291-383 adopt a coiled-coil conformation; that stretch reads RLMRKEKEVV…QARVEAELQR (93 aa). Disordered stretches follow at residues 495 to 693 and 747 to 858; these read TKAP…LPQA and SAVD…LSQS. Residues 516 to 525 are compositionally biased toward basic and acidic residues; that stretch reads SNWEVPRETE. A compositionally biased stretch (acidic residues) spans 526 to 535; it reads MIDSGDESEA. Polar residues-rich tracts occupy residues 548–572 and 580–598; these read SSKN…NSNV and SKQT…SSIG. The span at 636 to 648 shows a compositional bias: low complexity; that stretch reads SANNINNSSNGGS. Over residues 650–661 the composition is skewed to polar residues; sequence APSSTVTSNITV. The segment covering 676-691 has biased composition (low complexity); sequence SSFSQQQNNQPQQSLP. A compositionally biased stretch (polar residues) spans 760–780; the sequence is GQSQLPTRPRSQPQPITANFE. A compositionally biased stretch (low complexity) spans 781–802; sequence QQQQQQQSNTNSISSSNSAGSG.

It belongs to the protein kinase superfamily. CAMK Ser/Thr protein kinase family.

It is found in the nucleus. The enzyme catalyses L-seryl-[protein] + ATP = O-phospho-L-seryl-[protein] + ADP + H(+). It carries out the reaction L-threonyl-[protein] + ATP = O-phospho-L-threonyl-[protein] + ADP + H(+). Its function is as follows. Protein kinase that plays an important role in mitotic regulation. This is G2-specific protein kinase nim-1 (nim-1) from Neurospora crassa (strain ATCC 24698 / 74-OR23-1A / CBS 708.71 / DSM 1257 / FGSC 987).